Here is a 399-residue protein sequence, read N- to C-terminus: 5'-C-glycyluridine monooxygenase-decarboxylase (399 aa).

Thr179 is a phosphate binding site. Residue Lys230 is modified to N6-(pyridoxal phosphate)lysine. Arg318, Arg322, Arg353, and Arg367 together coordinate phosphate.

This sequence belongs to the SelA family. In terms of assembly, homooctamer; tetramer of homodimers. It depends on pyridoxal 5'-phosphate as a cofactor.

The enzyme catalyses (5'S,6'R)-C-glycyluridine + O2 = uridine-5'-carboxamide + CO2 + H2O. The protein operates within antibiotic biosynthesis. Its activity is regulated as follows. Activity is dependent on phosphate. Monooxygenase-decarboxylase involved in the biosynthesis of the capuramycin-type nucleoside antibiotic A-503083. Catalyzes the oxidative decarboxylation of 5'-C-glycyluridine (GlyU) to uridine-5'-carboxamide (CarU). Is stereospecific for the (5'S,6'R)-diastereomer of GlyU. Directly incorporates a single oxygen atom from O(2) into the product CarU. In Streptomyces sp, this protein is 5'-C-glycyluridine monooxygenase-decarboxylase.